The chain runs to 309 residues: Fructosamine-3-kinase (309 aa).

Position 1 is an N-acetylmethionine (Met1). 89-91 contributes to the ATP binding site; that stretch reads EHL. The active-site Proton acceptor is the Asp217.

It belongs to the fructosamine kinase family. In terms of assembly, monomer. In terms of tissue distribution, expressed in red blood cells, brain, heart, kidney and muscle. Lower expression is observed in liver. Not expressed in lung, spleen, testis and thymus.

The catalysed reaction is N(6)-(D-fructosyl)-L-lysyl-[protein] + ATP = N(6)-(3-O-phospho-D-fructosyl)-L-lysyl-[protein] + ADP + H(+). The enzyme catalyses N(6)-D-ribulosyl-L-lysyl-[protein] + ATP = N(6)-(3-O-phospho-D-ribulosyl)-L-lysyl-[protein] + ADP + H(+). It carries out the reaction N(6)-(D-psicosyl)-L-lysyl-[protein] + ATP = N(6)-(3-O-phospho-D-psicosyl)-L-lysyl-[protein] + ADP + H(+). Functionally, fructosamine-3-kinase involved in protein deglycation by mediating phosphorylation of fructoselysine residues on glycated proteins, to generate fructoselysine-3 phosphate. Fructoselysine-3 phosphate adducts are unstable and decompose under physiological conditions. Involved in intracellular deglycation in erythrocytes and pancreatic islets. Involved in the response to oxidative stress by mediating deglycation of NFE2L2/NRF2, glycation impairing NFE2L2/NRF2 function. Also able to phosphorylate psicosamines and ribulosamines. This Mus musculus (Mouse) protein is Fructosamine-3-kinase.